A 177-amino-acid chain; its full sequence is NADH-quinone oxidoreductase subunit E (177 aa).

The [2Fe-2S] cluster site is built by Cys93, Cys98, Cys134, and Cys138.

It belongs to the complex I 24 kDa subunit family. It depends on [2Fe-2S] cluster as a cofactor.

The catalysed reaction is a quinone + NADH + 5 H(+)(in) = a quinol + NAD(+) + 4 H(+)(out). In terms of biological role, NDH-1 shuttles electrons from NADH, via FMN and iron-sulfur (Fe-S) centers, to quinones in the respiratory chain. Couples the redox reaction to proton translocation (for every two electrons transferred, four hydrogen ions are translocated across the cytoplasmic membrane), and thus conserves the redox energy in a proton gradient. The chain is NADH-quinone oxidoreductase subunit E (nuoE) from Rickettsia prowazekii (strain Madrid E).